Here is a 348-residue protein sequence, read N- to C-terminus: E3 ubiquitin-protein ligase MARCHF9 (348 aa).

The tract at residues 48–96 is disordered; sequence ARDGDGDEEEYYGSEPRARGLAGDKEPRAGPPPPPAPPPPPPGALDALS. Residues 63–75 are compositionally biased toward basic and acidic residues; that stretch reads PRARGLAGDKEPR. The segment covering 76 to 90 has biased composition (pro residues); sequence AGPPPPPAPPPPPPG. Residues 102–162 form an RING-CH-type zinc finger; sequence DSGLRTPQCR…ELCYFKYQVL (61 aa). Zn(2+) contacts are provided by cysteine 110, cysteine 113, cysteine 126, cysteine 128, histidine 136, cysteine 139, cysteine 152, and cysteine 155. 2 consecutive transmembrane segments (helical) span residues 185–205 and 219–239; these read IAAIVLGSLFLVASISWLIWS and LFQICYGMYGFMDVVCIGLIV. 2 disordered regions span residues 272-304 and 328-348; these read GDTGGGAAGKPGPRTSRTSPPAGAPTRPPAAQR and PPDARSSSHSGREVVMRVTTV.

Homodimer.

It localises to the golgi apparatus membrane. The protein resides in the lysosome membrane. It catalyses the reaction S-ubiquitinyl-[E2 ubiquitin-conjugating enzyme]-L-cysteine + [acceptor protein]-L-lysine = [E2 ubiquitin-conjugating enzyme]-L-cysteine + N(6)-ubiquitinyl-[acceptor protein]-L-lysine.. It participates in protein modification; protein ubiquitination. Its function is as follows. E3 ubiquitin-protein ligase that may mediate ubiquitination of MHC-I, CD4 and ICAM1, and promote their subsequent endocytosis and sorting to lysosomes via multivesicular bodies. E3 ubiquitin ligases accept ubiquitin from an E2 ubiquitin-conjugating enzyme in the form of a thioester and then directly transfer the ubiquitin to targeted substrates. The polypeptide is E3 ubiquitin-protein ligase MARCHF9 (Marchf9) (Mus musculus (Mouse)).